A 344-amino-acid polypeptide reads, in one-letter code: MGHLPPPAEVRHPVYATRVLCEVANERGVPTADVLAGTAIEPADLDDPDAVVGALDEITAVRRLLARLPDDAGIGIDVGSRFALTHFGLFGFAVMSCGTLRELLTIAMRYFALTTMHVDITLFETADDCLVELDASHLPADVRGFFIERDIAGIIATTTSFALPLAAKYADQVSAELAVDAELLRPLLELVPVHDVAFGRAHNRVHFPRAMFDEPLPQADRHTLEMCIAQCDVLMQRNERRRGITALVRSKLFRDSGLFPTFTDVAGELDMHPRTLRRRLAEEGTSFRALLGEARSTVAVDLLRNVGLTVQQVSTRLGYTEVSTFSHAFKRWYGVAPSEYSRRG.

Positions 242-343 constitute an HTH araC/xylS-type domain; it reads RGITALVRSK…GVAPSEYSRR (102 aa). 2 DNA-binding regions (H-T-H motif) span residues 263 to 284 and 310 to 333; these read TDVA…AEEG and VQQV…KRWY.

This is an uncharacterized protein from Mycobacterium bovis (strain ATCC BAA-935 / AF2122/97).